The chain runs to 747 residues: MQKSITSFFKKKSDATDSPSPPKKVPKIDAKTELPDEPHIKSESASPETKPKVEPMSVDSEEKTSPVKNVKKEPKEVDDKTTDKKVTTIGLNSTAATKEDVENYDPSADSYHPLKNAYWKDKKVTPYLALARTFQVIEETKGRLKMIDTLSNFFCSVMLVSPEDLVPSVYLSINQLAPAYEGLELGVAETTLMKAICKATGRNLAHIKSQTQLTGDLGIVAEQSRVSQRMMFQPAPLNVRDVFRKLREIAKLSGQSKMDLVYNMFVACRSSEARFFIRSLIGKLRIGIAEQSLLTALAIGLVKKNHIDDCKASKVPDVYKDEIVDTTLLLKTAYCQCPNYDIIIPAILKYDIKELQERCPMHPGMPLRPMLAQPTKGVHEVFERFGGMQITCEWKYDGERAQIHRNEKGEISIFSRNSENNTAKYPDLIARSTALLKGDVKSYIIDSEIVAWDVERKQILPFQVLSTRKRKNVDIEEIKVQVCVYIFDLLYINGTALVTKNLSERRKLLLEHFQEVEGEWKFATALDTNDIDEVQQFLEESIKGNCEGLMVKTLDEEATYEIAKRSRNWLKLKKDYLSNVGDSLDLVVIGGYKGKGRRTGTYGGFLLACYDTENEEYQSICKIGTGFTDEDLQTHSEFLGKHVTSAAKSYYRYDPSLEPDHWFEPVQVWEVKCADLSLSPIHRAAIGIVDGERGISLRFPRFIRIRDDKNSENATDANQVAHMYQSQDQVKNNQKSSTQMEMEDEFY.

Positions 1-84 are disordered; it reads MQKSITSFFK…KEVDDKTTDK (84 aa). S18, S20, S42, S44, S46, S60, and S65 each carry phosphoserine. Residues 26 to 42 are compositionally biased toward basic and acidic residues; that stretch reads PKIDAKTELPDEPHIKS. Positions 60–84 are enriched in basic and acidic residues; that stretch reads SEEKTSPVKNVKKEPKEVDDKTTDK. The N6-AMP-lysine intermediate role is filled by K395. Positions 725–740 are enriched in polar residues; it reads QSQDQVKNNQKSSTQM. The interval 725–747 is disordered; the sequence is QSQDQVKNNQKSSTQMEMEDEFY.

Belongs to the ATP-dependent DNA ligase family.

The protein resides in the nucleus. The enzyme catalyses ATP + (deoxyribonucleotide)n-3'-hydroxyl + 5'-phospho-(deoxyribonucleotide)m = (deoxyribonucleotide)n+m + AMP + diphosphate.. Functionally, DNA ligase that seals nicks in double-stranded DNA during DNA replication, DNA recombination and DNA repair. The sequence is that of DNA ligase 1 from Drosophila melanogaster (Fruit fly).